Consider the following 557-residue polypeptide: Membrane protein insertase YidC (557 aa).

The helical transmembrane segment at asparagine 3–tryptophan 23 threads the bilayer. The interval alanine 34–serine 60 is disordered. 4 consecutive transmembrane segments (helical) span residues valine 366–tyrosine 386, leucine 436–leucine 456, tyrosine 480–alanine 500, and proline 514–valine 534.

The protein belongs to the OXA1/ALB3/YidC family. Type 1 subfamily. In terms of assembly, interacts with the Sec translocase complex via SecD. Specifically interacts with transmembrane segments of nascent integral membrane proteins during membrane integration.

It is found in the cell inner membrane. Required for the insertion and/or proper folding and/or complex formation of integral membrane proteins into the membrane. Involved in integration of membrane proteins that insert both dependently and independently of the Sec translocase complex, as well as at least some lipoproteins. Aids folding of multispanning membrane proteins. This is Membrane protein insertase YidC from Thioalkalivibrio sulfidiphilus (strain HL-EbGR7).